Reading from the N-terminus, the 92-residue chain is Small integral membrane protein 12 (92 aa).

A helical membrane pass occupies residues 15 to 34 (YVTFPVAFVVGAVGYHLEWF).

It belongs to the SMIM12 family.

The protein resides in the membrane. The sequence is that of Small integral membrane protein 12 (SMIM12) from Nomascus leucogenys (Northern white-cheeked gibbon).